We begin with the raw amino-acid sequence, 137 residues long: Acidic phospholipase A2 PL-II (137 aa).

The signal sequence occupies residues 1–17 (AVCVSLLGASSIRPLPL). Intrachain disulfides connect cysteine 28/cysteine 89, cysteine 44/cysteine 136, cysteine 46/cysteine 62, cysteine 61/cysteine 117, cysteine 68/cysteine 110, cysteine 78/cysteine 103, and cysteine 96/cysteine 108. Residues tyrosine 45, glycine 47, and glycine 49 each contribute to the Ca(2+) site. Histidine 65 is an active-site residue. Aspartate 66 provides a ligand contact to Ca(2+). Aspartate 111 is a catalytic residue.

Requires Ca(2+) as cofactor. As to expression, expressed by the venom gland.

The protein resides in the secreted. It catalyses the reaction a 1,2-diacyl-sn-glycero-3-phosphocholine + H2O = a 1-acyl-sn-glycero-3-phosphocholine + a fatty acid + H(+). Snake venom phospholipase A2 (PLA2) that may act in the hemostasis system of the prey. Exhibits hydrolytic activities, and prefers the anionic micelles (dPPC with deoxycholate) (54 umol/mg/min) to the zwitterionic micelles (dPPC with Triton X-100) (15 umol/mg/min). PLA2 catalyzes the calcium-dependent hydrolysis of the 2-acyl groups in 3-sn-phosphoglycerides. The chain is Acidic phospholipase A2 PL-II from Walterinnesia aegyptia (Desert black snake).